Reading from the N-terminus, the 159-residue chain is MKRAICSGSFDPVTNGHIDLFERAGALFDEIIIAILINNKKKPLFPLAERERLLRESIAHIKNATIDSFDGLLVDYAREKEATAIVRGLRSNADFEYEKNIATMNKELAPQLDTLFLMTDPNYSYVSSSIVKEVASYSQDVSKLVPQPVAHALKEVYRR.

Substrate is bound at residue serine 9. ATP-binding positions include 9 to 10 and histidine 17; that span reads SF. Substrate-binding residues include lysine 41, leucine 73, and arginine 87. ATP contacts are provided by residues 88–90, glutamate 98, and 123–129; these read GLR and YSYVSSS.

It belongs to the bacterial CoaD family. As to quaternary structure, homohexamer. It depends on Mg(2+) as a cofactor.

It is found in the cytoplasm. The enzyme catalyses (R)-4'-phosphopantetheine + ATP + H(+) = 3'-dephospho-CoA + diphosphate. It functions in the pathway cofactor biosynthesis; coenzyme A biosynthesis; CoA from (R)-pantothenate: step 4/5. In terms of biological role, reversibly transfers an adenylyl group from ATP to 4'-phosphopantetheine, yielding dephospho-CoA (dPCoA) and pyrophosphate. The protein is Phosphopantetheine adenylyltransferase of Shouchella clausii (strain KSM-K16) (Alkalihalobacillus clausii).